A 597-amino-acid polypeptide reads, in one-letter code: Arginine--tRNA ligase (597 aa).

Residues 125-135 (PNTNKPLHLGH) carry the 'HIGH' region motif.

The protein belongs to the class-I aminoacyl-tRNA synthetase family. In terms of assembly, monomer.

It is found in the cytoplasm. The enzyme catalyses tRNA(Arg) + L-arginine + ATP = L-arginyl-tRNA(Arg) + AMP + diphosphate. This is Arginine--tRNA ligase from Porphyromonas gingivalis (strain ATCC BAA-308 / W83).